A 292-amino-acid polypeptide reads, in one-letter code: Tubulin beta chain (292 aa).

N49 and N71 together coordinate GTP. The disordered stretch occupies residues 265–292 (SEYQQYQDATAEEEGEFDEEEEGDEEAA). The span at 274–292 (TAEEEGEFDEEEEGDEEAA) shows a compositional bias: acidic residues.

It belongs to the tubulin family. Dimer of alpha and beta chains. A typical microtubule is a hollow water-filled tube with an outer diameter of 25 nm and an inner diameter of 15 nM. Alpha-beta heterodimers associate head-to-tail to form protofilaments running lengthwise along the microtubule wall with the beta-tubulin subunit facing the microtubule plus end conferring a structural polarity. Microtubules usually have 13 protofilaments but different protofilament numbers can be found in some organisms and specialized cells. Mg(2+) serves as cofactor.

It localises to the cytoplasm. The protein resides in the cytoskeleton. Its function is as follows. Tubulin is the major constituent of microtubules, a cylinder consisting of laterally associated linear protofilaments composed of alpha- and beta-tubulin heterodimers. Microtubules grow by the addition of GTP-tubulin dimers to the microtubule end, where a stabilizing cap forms. Below the cap, tubulin dimers are in GDP-bound state, owing to GTPase activity of alpha-tubulin. This chain is Tubulin beta chain, found in Strongylocentrotus purpuratus (Purple sea urchin).